An 81-amino-acid chain; its full sequence is Small ribosomal subunit protein eS21 (81 aa).

This sequence belongs to the eukaryotic ribosomal protein eS21 family.

This is Small ribosomal subunit protein eS21 (RPS21) from Zea mays (Maize).